We begin with the raw amino-acid sequence, 310 residues long: Homeobox protein knotted-1-like 2 (310 aa).

Positions 178–208 (SDDGAVSSDEELREDDDIAADDSQQRSNDRD) are disordered. The span at 185 to 197 (SDEELREDDDIAA) shows a compositional bias: acidic residues. The region spanning 208–228 (DLKDQLLRKFGSHISSLKLEF) is the ELK domain. A DNA-binding region (homeobox; TALE-type) is located at residues 229–292 (SKKKKKGKLP…NQRKRHWKPS (64 aa)).

It belongs to the TALE/KNOX homeobox family. May form heterodimeric complex with the TALE/BELL protein BEL1, BLH1 and BLH2. Interacts with OFP12 and OFP14. Interacts with BZIP30. In terms of tissue distribution, expressed predominantly in shoot apices of seedlings, in the receptacle and developing pistil of flowers and in axillary buds of inflorescence stems.

It is found in the nucleus. In terms of biological role, may play a role in meristem function, and may be involved in maintaining cells in an undifferentiated, meristematic state. Probably binds to the DNA sequence 5'-TGAC-3'. The polypeptide is Homeobox protein knotted-1-like 2 (KNAT2) (Arabidopsis thaliana (Mouse-ear cress)).